Here is a 390-residue protein sequence, read N- to C-terminus: Protein shisa-9 (390 aa).

An N-terminal signal peptide occupies residues 1–22 (MTGIRAIFYYFLVDLLTLLCWA). The Extracellular portion of the chain corresponds to 23–134 (QGKGGQHFGS…DPSHDPTRDK (112 aa)). Residues Asn40 and Asn74 are each glycosylated (N-linked (GlcNAc...) asparagine). A helical transmembrane segment spans residues 135-155 (TNLIVYIICGVVAVMVLVGIF). Residues 156-390 (TKLGLEKAHR…VTNSKTEVTV (235 aa)) are Cytoplasmic-facing.

This sequence belongs to the shisa family. SHISA9 subfamily. Component of some AMPA receptors (ionotropic glutamate receptors) complex.

It is found in the cell projection. Its subcellular location is the dendritic spine membrane. The protein localises to the synapse. In terms of biological role, regulator of short-term neuronal synaptic plasticity in the dentate gyrus. Associates with AMPA receptors (ionotropic glutamate receptors) in synaptic spines and promotes AMPA receptor desensitization at excitatory synapses. This is Protein shisa-9 (shisa9) from Xenopus tropicalis (Western clawed frog).